The chain runs to 341 residues: HTH-type transcriptional repressor PurR (341 aa).

An HTH lacI-type domain is found at 2-56 (ATIKDVAKRANVSTTTVSHVINKTRFVAEETRNAVWAAIKELHYSPSAVARSLKV). Residues 4–23 (IKDVAKRANVSTTTVSHVIN) constitute a DNA-binding region (H-T-H motif). Residues 48–56 (SAVARSLKV) mediate DNA binding. Tyr73, Arg190, Thr192, Phe221, and Asp275 together coordinate hypoxanthine.

Homodimer.

It participates in purine metabolism; purine nucleotide biosynthesis [regulation]. Functionally, is the main repressor of the genes involved in the de novo synthesis of purine nucleotides, regulating purB, purC, purEK, purF, purHD, purL, purMN and guaBA expression. PurR is allosterically activated to bind its cognate DNA by binding the purine corepressors, hypoxanthine or guanine, thereby effecting transcription repression. The protein is HTH-type transcriptional repressor PurR of Salmonella arizonae (strain ATCC BAA-731 / CDC346-86 / RSK2980).